The following is a 422-amino-acid chain: Serine--tRNA ligase (422 aa).

226–228 provides a ligand contact to L-serine; it reads TSE. ATP-binding positions include 257–259 and valine 273; that span reads RRE. Glutamate 280 contributes to the L-serine binding site. 344–347 serves as a coordination point for ATP; it reads ELTS. Threonine 379 contacts L-serine.

The protein belongs to the class-II aminoacyl-tRNA synthetase family. Type-1 seryl-tRNA synthetase subfamily. In terms of assembly, homodimer. The tRNA molecule binds across the dimer.

The protein localises to the cytoplasm. The catalysed reaction is tRNA(Ser) + L-serine + ATP = L-seryl-tRNA(Ser) + AMP + diphosphate + H(+). The enzyme catalyses tRNA(Sec) + L-serine + ATP = L-seryl-tRNA(Sec) + AMP + diphosphate + H(+). It participates in aminoacyl-tRNA biosynthesis; selenocysteinyl-tRNA(Sec) biosynthesis; L-seryl-tRNA(Sec) from L-serine and tRNA(Sec): step 1/1. Its function is as follows. Catalyzes the attachment of serine to tRNA(Ser). Is also able to aminoacylate tRNA(Sec) with serine, to form the misacylated tRNA L-seryl-tRNA(Sec), which will be further converted into selenocysteinyl-tRNA(Sec). The protein is Serine--tRNA ligase of Corynebacterium glutamicum (strain ATCC 13032 / DSM 20300 / JCM 1318 / BCRC 11384 / CCUG 27702 / LMG 3730 / NBRC 12168 / NCIMB 10025 / NRRL B-2784 / 534).